We begin with the raw amino-acid sequence, 217 residues long: Vesicle transport through interaction with t-SNAREs homolog 1A (217 aa).

Over 1-192 (MSSDFEGYEQ…GMLRRIIQNR (192 aa)) the chain is Cytoplasmic. Coiled-coil stretches lie at residues 31–92 (PDEK…KRSR) and 112–178 (ENQR…GKSS). The chain crosses the membrane as a helical; Anchor for type IV membrane protein span at residues 193-213 (ILLVILGIIVVIAILTAIAFF). Residues 214-217 (VKGH) lie on the Vesicular side of the membrane.

Belongs to the VTI1 family. Interacts with distinct SNARE complexes that contain either STX5 or STX6. Interacts with NAPA and, to a lesser extent, with NAPG. Identified in a complex containing STX6, STX12, VAMP4 and VTI1A. In terms of tissue distribution, widely expressed.

The protein resides in the golgi apparatus membrane. In terms of biological role, V-SNARE that mediates vesicle transport pathways through interactions with t-SNAREs on the target membrane. These interactions are proposed to mediate aspects of the specificity of vesicle trafficking and to promote fusion of the lipid bilayers. Involved in vesicular transport from the late endosomes to the trans-Golgi network. Along with VAMP7, involved in an non-conventional RAB1-dependent traffic route to the cell surface used by KCNIP1 and KCND2. May be concerned with increased secretion of cytokines associated with cellular senescence. The sequence is that of Vesicle transport through interaction with t-SNAREs homolog 1A (Vti1a) from Mus musculus (Mouse).